We begin with the raw amino-acid sequence, 789 residues long: Protein translocase subunit SecA (789 aa).

Residues Q85, 103-107 (GEGKT), and D492 each bind ATP.

This sequence belongs to the SecA family. In terms of assembly, monomer and homodimer. Part of the essential Sec protein translocation apparatus which comprises SecA, SecYEG and auxiliary proteins SecDF. Other proteins may also be involved.

The protein localises to the cell membrane. It is found in the cytoplasm. It catalyses the reaction ATP + H2O + cellular proteinSide 1 = ADP + phosphate + cellular proteinSide 2.. Part of the Sec protein translocase complex. Interacts with the SecYEG preprotein conducting channel. Has a central role in coupling the hydrolysis of ATP to the transfer of proteins into and across the cell membrane, serving as an ATP-driven molecular motor driving the stepwise translocation of polypeptide chains across the membrane. The polypeptide is Protein translocase subunit SecA (Limosilactobacillus fermentum (strain NBRC 3956 / LMG 18251) (Lactobacillus fermentum)).